We begin with the raw amino-acid sequence, 37 residues long: Cytochrome b6-f complex subunit 5 (37 aa).

Residues 5–25 traverse the membrane as a helical segment; the sequence is LLSGIVLGLITVSALGLFVAA.

It belongs to the PetG family. As to quaternary structure, the 4 large subunits of the cytochrome b6-f complex are cytochrome b6, subunit IV (17 kDa polypeptide, PetD), cytochrome f and the Rieske protein, while the 4 small subunits are PetG, PetL, PetM and PetN. The complex functions as a dimer.

It localises to the plastid. Its subcellular location is the chloroplast thylakoid membrane. Component of the cytochrome b6-f complex, which mediates electron transfer between photosystem II (PSII) and photosystem I (PSI), cyclic electron flow around PSI, and state transitions. PetG is required for either the stability or assembly of the cytochrome b6-f complex. The polypeptide is Cytochrome b6-f complex subunit 5 (Phaeodactylum tricornutum (strain CCAP 1055/1)).